The primary structure comprises 693 residues: Elongation factor G (693 aa).

The tr-type G domain maps to 8–284 (HMVRNIGIAA…AVIDYLPAPD (277 aa)). GTP is bound by residues 17-24 (AHIDAGKT), 81-85 (DTPGH), and 135-138 (NKMD).

The protein belongs to the TRAFAC class translation factor GTPase superfamily. Classic translation factor GTPase family. EF-G/EF-2 subfamily.

It is found in the cytoplasm. Its function is as follows. Catalyzes the GTP-dependent ribosomal translocation step during translation elongation. During this step, the ribosome changes from the pre-translocational (PRE) to the post-translocational (POST) state as the newly formed A-site-bound peptidyl-tRNA and P-site-bound deacylated tRNA move to the P and E sites, respectively. Catalyzes the coordinated movement of the two tRNA molecules, the mRNA and conformational changes in the ribosome. The sequence is that of Elongation factor G from Nautilia profundicola (strain ATCC BAA-1463 / DSM 18972 / AmH).